The chain runs to 231 residues: MSNREVIIALDFDSLDKTCKFLNLFENQNLFVKIGMELFYQNGLQVLHEIKNRGHKIFLDLKLHDIPNTVYHAVKGLMKFDVDIITVHCAGGLTMLNQAKQAVFDQNKNTKIIGITQLTSTSETEMQTQQKISTSLQDSVLNYAKLAKEANIDGVVSSVWETKKIKEQNGNNFLVINPGIRLEKDDSGDQKRVASPLDAKNQLADFIVVGRPITKDNNPLEKYLEIKRMFV.

Substrate-binding positions include aspartate 11, lysine 33, 60-69 (DLKLHDIPNT), threonine 119, arginine 181, glutamine 190, glycine 210, and arginine 211. Residue lysine 62 is the Proton donor of the active site.

The protein belongs to the OMP decarboxylase family. Type 1 subfamily. Homodimer.

The enzyme catalyses orotidine 5'-phosphate + H(+) = UMP + CO2. The protein operates within pyrimidine metabolism; UMP biosynthesis via de novo pathway; UMP from orotate: step 2/2. In terms of biological role, catalyzes the decarboxylation of orotidine 5'-monophosphate (OMP) to uridine 5'-monophosphate (UMP). The protein is Orotidine 5'-phosphate decarboxylase of Malacoplasma penetrans (strain HF-2) (Mycoplasma penetrans).